Here is a 1071-residue protein sequence, read N- to C-terminus: Carbamoyl phosphate synthase pyrimidine-specific large chain (1071 aa).

The interval 1-401 (MPKRVDINKI…SLLKAVRSLE (401 aa)) is carboxyphosphate synthetic domain. Positions 129, 169, 175, 176, 208, 210, 215, 241, 242, 243, 284, and 298 each coordinate ATP. The ATP-grasp 1 domain occupies 133–327 (RTLMNELNEP…IAKLAAKIAV (195 aa)). Mg(2+) is bound by residues Gln-284, Glu-298, and Asn-300. Residues Gln-284, Glu-298, and Asn-300 each contribute to the Mn(2+) site. An oligomerization domain region spans residues 402–546 (ADVYHLELKD…YSTYEEENES (145 aa)). The segment at 547–929 (VVTDKKSVMV…ALYKALIASG (383 aa)) is carbamoyl phosphate synthetic domain. Positions 671–861 (EQALGELGVP…MANLATKIIL (191 aa)) constitute an ATP-grasp 2 domain. ATP contacts are provided by Arg-707, Arg-746, Leu-748, Glu-752, Gly-777, Val-778, His-779, Ser-780, Gln-820, and Glu-832. Gln-820, Glu-832, and Asn-834 together coordinate Mg(2+). Gln-820, Glu-832, and Asn-834 together coordinate Mn(2+). The region spanning 930 to 1071 (IQIPNYGSVL…NTNQEAAVTI (142 aa)) is the MGS-like domain. Residues 930–1071 (IQIPNYGSVL…NTNQEAAVTI (142 aa)) form an allosteric domain region.

Belongs to the CarB family. As to quaternary structure, composed of two chains; the small (or glutamine) chain promotes the hydrolysis of glutamine to ammonia, which is used by the large (or ammonia) chain to synthesize carbamoyl phosphate. Tetramer of heterodimers (alpha,beta)4. Interacts with BrxC. Requires Mg(2+) as cofactor. Mn(2+) is required as a cofactor.

It carries out the reaction hydrogencarbonate + L-glutamine + 2 ATP + H2O = carbamoyl phosphate + L-glutamate + 2 ADP + phosphate + 2 H(+). The enzyme catalyses hydrogencarbonate + NH4(+) + 2 ATP = carbamoyl phosphate + 2 ADP + phosphate + 2 H(+). The protein operates within amino-acid biosynthesis; L-arginine biosynthesis; carbamoyl phosphate from bicarbonate: step 1/1. Its pathway is pyrimidine metabolism; UMP biosynthesis via de novo pathway; (S)-dihydroorotate from bicarbonate: step 1/3. In terms of biological role, small subunit of the glutamine-dependent carbamoyl phosphate synthetase (CPSase). CPSase catalyzes the formation of carbamoyl phosphate from the ammonia moiety of glutamine, carbonate, and phosphate donated by ATP, constituting the first step of the biosynthetic pathway leading to pyrimidine nucleotides. The large subunit (synthetase) binds the substrates ammonia (free or transferred from glutamine from the small subunit), hydrogencarbonate and ATP and carries out an ATP-coupled ligase reaction, activating hydrogencarbonate by forming carboxy phosphate which reacts with ammonia to form carbamoyl phosphate. The protein is Carbamoyl phosphate synthase pyrimidine-specific large chain (pyrAB) of Bacillus subtilis (strain 168).